Here is a 1374-residue protein sequence, read N- to C-terminus: Mitogen-activated protein kinase kinase kinase 5 (1374 aa).

The interval 68–87 (PAATSSSSATRGRGSSVGGG) is disordered. Over residues 69-81 (AATSSSSATRGRG) the composition is skewed to low complexity. Asymmetric dimethylarginine; by PRMT1 is present on residues Arg78 and Arg80. Residue Ser83 is modified to Phosphoserine; by PIM1 and PKB/AKT1. The segment at 649-1374 (MVNTITEEKG…AIIDFRNKQT (726 aa)) is interaction with PPIA/CYPA. A Protein kinase domain is found at 680-938 (NGDRVVLGKG…ANDLLVDEFL (259 aa)). ATP contacts are provided by residues 686-694 (LGKGTYGIV) and Lys709. Tyr718 is subject to Phosphotyrosine. Asp803 (proton acceptor) is an active-site residue. Thr813 carries the phosphothreonine; by autocatalysis modification. The residue at position 838 (Thr838) is a Phosphothreonine; by autocatalysis, MELK and MAP3K6. Thr842 bears the Phosphothreonine; by autocatalysis mark. Ser958 carries the phosphoserine modification. Residue Ser966 is modified to Phosphoserine; by autocatalysis. A phosphoserine mark is found at Ser1029 and Ser1033. The disordered stretch occupies residues 1182–1209 (SESDTADQEDLDVEDDHEEQPSNQTVRR). Residues 1185–1199 (DTADQEDLDVEDDHE) are compositionally biased toward acidic residues. The stretch at 1245-1285 (LGRMKIETNRLLEELVRKEKELQALLHRAIEEKDQEIKHLK) forms a coiled coil.

This sequence belongs to the protein kinase superfamily. STE Ser/Thr protein kinase family. MAP kinase kinase kinase subfamily. As to quaternary structure, homodimer when inactive. Binds both upstream activators and downstream substrates in multimolecular complexes. Part of a cytoplasmic complex made of HIPK1, DAB2IP and MAP3K5 in response to TNF. This complex formation promotes MAP3K5-JNK activation and subsequent apoptosis. Interacts with SOCS1 which recognizes phosphorylation of Tyr-718 and induces MAP3K5/ASK1 degradation in endothelial cells. Interacts with the 14-3-3 family proteins such as YWHAB, YWHAE, YWHAQ, YWHAH, YWHAZ and SFN. Interacts with ARRB2, BIRC2, DAB2IP, IGF1R, MAP3K6/ASK2, PGAM5, PIM1, PPP5C, SOCS1, STUB1, TRAF2, TRAF6 and TXN. Interacts with ERN1 in a TRAF2-dependent manner. Interacts with calcineurin subunit PPP3R1. Interacts with PPM1L. Interacts (via N-terminus) with RAF1 and this interaction inhibits the proapoptotic function of MAP3K5. Interacts with DAB2IP (via N-terminus C2 domain); the interaction occurs in a TNF-alpha-dependent manner. Interacts with DUSP13A; may positively regulate apoptosis. Interacts with DAXX. Interacts with RC3H2. Interacts with PPIA/CYPA. Interacts with PRMT1; the interaction results in MAP3K5 methylation by PRMT1 which inhibits MAP3K5 activation. Interacts with TRAF2; the interaction is inhibited by PRMT1. Interacts with TRIM48. In terms of assembly, (Microbial infection) Interacts with HIV-1 Nef; this interaction inhibits MAP3K5 signaling. Mg(2+) is required as a cofactor. In terms of processing, phosphorylated at Thr-838 through autophosphorylation and by MAP3K6/ASK2 which leads to activation. Thr-838 is dephosphorylated by PPP5C. Ser-83 and Ser-1033 are inactivating phosphorylation sites, the former of which is phosphorylated by AKT1. Phosphorylated at Ser-966 which induces association of MAP3K5/ASK1 with the 14-3-3 family proteins and suppresses MAP3K5/ASK1 activity. Calcineurin (CN) dephosphorylates this site. Also dephosphorylated and activated by PGAM5. Phosphorylation at Ser-966 in response to oxidative stress is negatively regulated by PPIA/CYPA. Post-translationally, ubiquitinated. Tumor necrosis factor (TNF) induces TNFR2-dependent ubiquitination, leading to proteasomal degradation. Ubiquitinated by RC3H2 in a TRIM48-dependent manner. Methylation at Arg-78 and Arg-80 by PRMT1 promotes association of MAP3K5 with thioredoxin and negatively regulates MAP3K5 association with TRAF2, inhibiting MAP3K5 activation. Methylation is blocked by ubiquitination of PRMT1 by TRIM48. As to expression, abundantly expressed in heart and pancreas.

Its subcellular location is the cytoplasm. The protein localises to the endoplasmic reticulum. The enzyme catalyses L-seryl-[protein] + ATP = O-phospho-L-seryl-[protein] + ADP + H(+). The catalysed reaction is L-threonyl-[protein] + ATP = O-phospho-L-threonyl-[protein] + ADP + H(+). Its activity is regulated as follows. Activated by various stressors, including oxidative stress, endoplasmic reticulum stress, and calcium overload, as well as by receptor-mediated inflammatory signals, such as the tumor necrosis factor (TNF) and lipopolysaccharide (LPS). Homophilic association of MAP3K5/ASK1 through the C-terminal coiled-coil domains and the heteromeric complex formation of MAP3K5/ASK1 with the reduced form of thioredoxin (TXN), constitutes an inactive form of the kinase. Upon ROS-induced dissociation of TXN from MAP3K5/ASK1, TRAF2 and TRAF6 are reciprocally recruited to MAP3K5/ASK1 and form the active MAP3K5/ASK1 signalosome, in which TRAF2 and TRAF6 appear to facilitate the active configuration of MAP3K5/ASK1. MAP3K5/ASK1 activity is also regulated through several phosphorylation and dephosphorylation events. Thr-838 is an activating phosphorylation site that is autophosphorylated and phosphorylated by MAP3K6/ASK2 and dephosphorylated by PPP5C. Ser-83 and Ser-1033 are inactivating phosphorylation sites, the former of which is phosphorylated by AKT1. Phosphorylation of Ser-966 induces association of MAP3K5/ASK1 with the 14-3-3 family proteins, which suppresses MAP3K5/ASK1 activity. Calcium/calmodulin-activated protein phosphatase calcineurin (PPP3CA) has been shown to directly dephosphorylate this site. SOCS1 binds to ASK1 by recognizing phosphorylation of Tyr-718 and induces MAP3K5/ASK1 degradation in endothelial cells. Also dephosphorylated and activated by PGAM5. Contains an N-terminal autoinhibitory domain. Once activated targeted for proteasomal degradation by RC3H2-mediated ubiquitination. Its function is as follows. Serine/threonine kinase which acts as an essential component of the MAP kinase signal transduction pathway. Plays an important role in the cascades of cellular responses evoked by changes in the environment. Mediates signaling for determination of cell fate such as differentiation and survival. Plays a crucial role in the apoptosis signal transduction pathway through mitochondria-dependent caspase activation. MAP3K5/ASK1 is required for the innate immune response, which is essential for host defense against a wide range of pathogens. Mediates signal transduction of various stressors like oxidative stress as well as by receptor-mediated inflammatory signals, such as the tumor necrosis factor (TNF) or lipopolysaccharide (LPS). Once activated, acts as an upstream activator of the MKK/JNK signal transduction cascade and the p38 MAPK signal transduction cascade through the phosphorylation and activation of several MAP kinase kinases like MAP2K4/SEK1, MAP2K3/MKK3, MAP2K6/MKK6 and MAP2K7/MKK7. These MAP2Ks in turn activate p38 MAPKs and c-jun N-terminal kinases (JNKs). Both p38 MAPK and JNKs control the transcription factors activator protein-1 (AP-1). This chain is Mitogen-activated protein kinase kinase kinase 5 (MAP3K5), found in Homo sapiens (Human).